A 712-amino-acid chain; its full sequence is MWSSIENMKANLHKIVLDVHEDDEEEDDLHKYGSANGVSNSDRRNSSGFRSVSRYSISNGIESPAHHEIERYKAEIKKLQESESDIKALSVNYAALLREKEDQISRLNQENGSLKQNLTSTSAALKEARTDISRGSNNYAIKGNNDQSPNRLHKSVSHLKSPNHMSNGKGKDTDSFIKEKDLADMLEDRTKSMAAVQATELAKEREKLRDFQLSLQEERKRSESFKEELESMRLDKNKTSMEISKMRSELDAKLLEIKHLQMKLTGQESHAIGPGMEHLKEVNKALEKENNELKLKRSELEAALEESRKLTNSKVFPDATESLTRHPSTLDKEKPESFPGKEEMEQSLQRLEMDLKETQRERDKARQELKRLKQHLLEKETEESEKMDEDSRLIEELRQTNEYQRSQISHLEKSLKQAISNQEDNRLSNDNQIRKLKDTVDDLNQKLTNCLRTIESKNVELLNLQTALGQYYAEIEAKEHFERELAMAKDELMKLSARLKDSDERLESSNKEKEDVTSKLLHAEKVAAEWKNRVTKVEEDNAKVRRVLEQSMTRLNRMSMESDYLVDRRIVIKLLVTYFQKNHNKEVLDLMVRMLGFSEEDKERIGAAKQGGGKGVVRGVLGFPGRFVGGILGGKSAELHANAASDNQSFADLWVDFLLKDAEERERREAEEAAASKAKQDSERTRQEAALHDSEFSTVPLRSSESNQRLSR.

Positions 23–49 (DEEEDDLHKYGSANGVSNSDRRNSSGF) are disordered. Residues 36–49 (NGVSNSDRRNSSGF) show a composition bias toward polar residues. Residues 65–134 (AHHEIERYKA…LKEARTDISR (70 aa)) adopt a coiled-coil conformation. Over residues 135–150 (GSNNYAIKGNNDQSPN) the composition is skewed to polar residues. Disordered stretches follow at residues 135–176 (GSNN…TDSF) and 306–347 (ESRK…MEQS). Coiled-coil stretches lie at residues 197-313 (QATE…LTNS), 340-558 (GKEE…LNRM), and 659-690 (LKDA…QEAA). The span at 328 to 344 (STLDKEKPESFPGKEEM) shows a compositional bias: basic and acidic residues. A GRIP domain is found at 557–608 (RMSMESDYLVDRRIVIKLLVTYFQKNHNKEVLDLMVRMLGFSEEDKERIGAA). Residues 666–712 (ERREAEEAAASKAKQDSERTRQEAALHDSEFSTVPLRSSESNQRLSR) form a disordered region. The segment covering 678–695 (AKQDSERTRQEAALHDSE) has biased composition (basic and acidic residues). Positions 696–712 (FSTVPLRSSESNQRLSR) are enriched in polar residues.

In terms of assembly, interacts with ARF1; preferentially with the active form of the protein.

Its subcellular location is the golgi apparatus. It localises to the endosome. Golgi matrix protein playing a role in tethering of vesicles to Golgi membranes and in maintaining the overall structure of the Golgi apparatus. The protein is Golgin candidate 3 (GC3) of Arabidopsis thaliana (Mouse-ear cress).